Reading from the N-terminus, the 506-residue chain is Maturase K (506 aa).

This sequence belongs to the intron maturase 2 family. MatK subfamily.

It localises to the plastid. The protein localises to the chloroplast. Functionally, usually encoded in the trnK tRNA gene intron. Probably assists in splicing its own and other chloroplast group II introns. This chain is Maturase K, found in Trifolium striatum (Knotted clover).